Consider the following 1706-residue polypeptide: Bifunctional hemolysin/adenylate cyclase (1706 aa).

Positions 1-399 are a, catalytic; it reads MQQSHQAGYA…RRPSLGAVER (399 aa). 349 to 356 lines the ATP pocket; that stretch reads AYGVAGKS. Positions 383-405 are disordered; the sequence is VPASPGLRRPSLGAVERQDSGYD. The tract at residues 400–912 is b, Ala/Gly-rich; it reads QDSGYDSLDG…LKHSIKLDVI (513 aa). Residues 500–698 form a required for interaction with CyaC region; that stretch reads LSAAVFGLGE…SVVGAPVAVV (199 aa). Residues Lys860 and Lys983 are each lipidated (N6-palmitoyl lysine). The interval 913 to 1656 is c; sequence GGDGDDVVLA…RDADHRVEII (744 aa). Hemolysin-type calcium-binding repeat units follow at residues 1014–1031, 1032–1049, 1050–1067, 1155–1172, 1173–1190, 1279–1296, 1297–1314, 1315–1332, 1335–1352, 1411–1428, 1429–1446, 1447–1464, 1468–1484, 1537–1554, 1555–1572, 1573–1590, and 1603–1620; these read IGGA…DNFL, AGGS…NDTL, VGGE…DDVF, WGHD…DDIL, RGGL…NDIF, MGQG…DDLL, FGGD…NDTL, YGGL…NDWF, TQAR…VDTV, TGDA…ADVL, AGGE…DDQL, SGDA…DDWF, AANA…RDTV, IGDA…NDVL, SGGA…SDLL, SGDA…DDTY, and ESGG…ADQL. Positions 1657-1706 are d, Asp/Gly-rich; it reads HAANQAVDQAGIEKLVEAMAQYPDPGAAAAAPPAARVPDTLMQSLAVNWR.

In the N-terminal section; belongs to the adenylyl cyclase class-2 family. The protein in the C-terminal section; belongs to the RTX prokaryotic toxin family. Released in a processed form. In terms of processing, palmitoylated at Lys-860 and Lys-983 by CyaC. The toxin only becomes active when modified in position Lys-983: palmitoylation is required for efficient membrane insertion and pore formation of the acylated Hemolysin chain.

It is found in the secreted. It localises to the host cell membrane. It catalyses the reaction ATP = 3',5'-cyclic AMP + diphosphate. Its activity is regulated as follows. Activated by host calmodulin. In terms of biological role, bifunctional adenylate cyclase toxin-hemolysin that plays a crucial role in host colonization. It causes whooping cough by acting on mammalian cells by elevating cAMP-concentration and thus disrupts normal cell function. Its function is as follows. Adenylate cyclase that is activated by host intracellular calmodulin and catalyzes un-regulated conversion of ATP to cAMP, thereby impairing microbicidal functions of immune effector cells and inducing apoptosis of lung macrophages. Functionally, hemolysin that forms small cation-selective membrane channels, leading to hemolytic activity. The hemolytic activity of CyaA is weak compared with that of the HlyA of E.coli. The polypeptide is Bifunctional hemolysin/adenylate cyclase (cya) (Bordetella pertussis (strain Tohama I / ATCC BAA-589 / NCTC 13251)).